The primary structure comprises 648 residues: Glutenin, high molecular weight subunit DY10 (648 aa).

Positions 1–21 (MAKRLVLFAAVVIALVALTTA) are cleaved as a signal peptide. Residues 127–648 (YYPGVTSPRQ…EGGDALSASQ (522 aa)) are disordered. Composition is skewed to low complexity over residues 141 to 166 (PGQASPQQPGQGQQPGKWQEPGQGQQ), 195 to 236 (QQPG…WQQG), and 243 to 263 (QQLGQGQQPRQWQQSGQGQQG). Polar residues predominate over residues 264–274 (HYPTSLQQPGQ). Low complexity-rich tracts occupy residues 284–353 (QQQP…GQQG), 360–416 (QQPG…GQQG), 459–502 (QQPG…PGQG), 510–523 (QGYYPTSPQQPGQG), and 531–565 (QGHCPTSPQQSGQAQQPGQGQQIGQVQQPGQGQQG). Positions 578 to 592 (QQSGQGQQSGQGHQP) are enriched in gly residues. The span at 593-604 (GQGQQSGQEQQG) shows a compositional bias: low complexity.

The protein belongs to the gliadin/glutenin family. In terms of assembly, disulfide-bridge linked aggregates.

Glutenins are high-molecular weight seed storage proteins of wheat endosperm. Thought to be responsible for the visco-elastic property of wheat dough. This is Glutenin, high molecular weight subunit DY10 (GLU-D1-2B) from Triticum aestivum (Wheat).